Here is a 227-residue protein sequence, read N- to C-terminus: Phosphoribosylformylglycinamidine synthase subunit PurQ (227 aa).

In terms of domain architecture, Glutamine amidotransferase type-1 spans 2–226 (KFAVIQFPGS…VQAWKEEQVN (225 aa)). Cys-86 (nucleophile) is an active-site residue. Catalysis depends on residues His-195 and Glu-197.

Part of the FGAM synthase complex composed of 1 PurL, 1 PurQ and 2 PurS subunits.

Its subcellular location is the cytoplasm. It carries out the reaction N(2)-formyl-N(1)-(5-phospho-beta-D-ribosyl)glycinamide + L-glutamine + ATP + H2O = 2-formamido-N(1)-(5-O-phospho-beta-D-ribosyl)acetamidine + L-glutamate + ADP + phosphate + H(+). The catalysed reaction is L-glutamine + H2O = L-glutamate + NH4(+). It functions in the pathway purine metabolism; IMP biosynthesis via de novo pathway; 5-amino-1-(5-phospho-D-ribosyl)imidazole from N(2)-formyl-N(1)-(5-phospho-D-ribosyl)glycinamide: step 1/2. In terms of biological role, part of the phosphoribosylformylglycinamidine synthase complex involved in the purines biosynthetic pathway. Catalyzes the ATP-dependent conversion of formylglycinamide ribonucleotide (FGAR) and glutamine to yield formylglycinamidine ribonucleotide (FGAM) and glutamate. The FGAM synthase complex is composed of three subunits. PurQ produces an ammonia molecule by converting glutamine to glutamate. PurL transfers the ammonia molecule to FGAR to form FGAM in an ATP-dependent manner. PurS interacts with PurQ and PurL and is thought to assist in the transfer of the ammonia molecule from PurQ to PurL. In Listeria welshimeri serovar 6b (strain ATCC 35897 / DSM 20650 / CCUG 15529 / CIP 8149 / NCTC 11857 / SLCC 5334 / V8), this protein is Phosphoribosylformylglycinamidine synthase subunit PurQ.